Consider the following 63-residue polypeptide: Large ribosomal subunit protein uL29 (63 aa).

Belongs to the universal ribosomal protein uL29 family.

The sequence is that of Large ribosomal subunit protein uL29 from Bordetella petrii (strain ATCC BAA-461 / DSM 12804 / CCUG 43448).